The chain runs to 339 residues: Deubiquitinase and deneddylase Dub2 (339 aa).

The helical transmembrane segment at 36 to 56 threads the bilayer; sequence IIIALFLIVISCGLILCAYTF. Catalysis depends on residues H203, D220, and C282.

This sequence belongs to the peptidase C48 family.

The protein resides in the secreted. It is found in the host cell. It localises to the membrane. Functionally, effector proteins function to alter host cell physiology and promote bacterial survival in host tissues. This protease possesses deubiquitinating and deneddylating activities. The polypeptide is Deubiquitinase and deneddylase Dub2 (cdu2) (Chlamydia trachomatis serovar B (strain Jali20/OT)).